Here is a 362-residue protein sequence, read N- to C-terminus: Glycyl-glycine endopeptidase ALE-1 (362 aa).

A signal peptide spans 1–35; sequence MDTNRKFTLVKSLSIGLGTFLVGSVFLTVNDEASA. A disordered region spans residues 35–110; the sequence is ASTKVDAPKV…PAKADAPKVE (76 aa). The segment covering 40-110 has biased composition (basic and acidic residues); that stretch reads DAPKVEQEAP…PAKADAPKVE (71 aa). Zn(2+) contacts are provided by His-150 and Asp-154. His-231 is a catalytic residue. His-233 lines the Zn(2+) pocket. The region spanning 282–350 is the SH3b domain; it reads SESASFTANT…YLPVRTWNES (69 aa).

Belongs to the peptidase M23B family. Zn(2+) serves as cofactor.

It localises to the secreted. The enzyme catalyses Hydrolysis of the -Gly-|-Gly- bond in the pentaglycine inter-peptide link joining staphylococcal cell wall peptidoglycans.. Functionally, lyses staphylococcal cells by hydrolyzing the polyglycine interpeptide bridges of the peptidoglycan. The protein is Glycyl-glycine endopeptidase ALE-1 of Staphylococcus capitis.